The primary structure comprises 331 residues: MAKTMMQDRLINPLEGAADAPDANIRPALLAEYIGQPVVREQMEVFIQAARARDEALDHTLIFGPPGLGKTTLANIIAREMGGNLRSTSGPVLERAGDLAAMLTNLEAGDVLFIDEIHRLSPVIEEILYPAMEDFQLDIMIGEGPAARSIKLDLPPFTLVAATTRAGLLTSPLRDRFGIVQRLEFYNIADLTTIVSRAARLMRVPMSEDGAVEIARRARGTPRIANRLLRRVRDYAQVRGDGSINGAIAGSALDMLAVDRRGLDHLDRRYIEILHERFDGGPAGVEAVAAAMAEDRGTLEDVIEPYLIQQGYVLRTARGRVLTQMAIDQML.

Residues 1 to 186 are large ATPase domain (RuvB-L); sequence MAKTMMQDRL…FGIVQRLEFY (186 aa). ATP-binding positions include isoleucine 25, arginine 26, glycine 67, lysine 70, threonine 71, threonine 72, 133–135, arginine 176, tyrosine 186, and arginine 223; that span reads EDF. Threonine 71 lines the Mg(2+) pocket. The tract at residues 187–257 is small ATPAse domain (RuvB-S); sequence NIADLTTIVS…IAGSALDMLA (71 aa). A head domain (RuvB-H) region spans residues 260 to 331; that stretch reads RRGLDHLDRR…LTQMAIDQML (72 aa). The DNA site is built by arginine 296, arginine 315, and arginine 320.

Belongs to the RuvB family. Homohexamer. Forms an RuvA(8)-RuvB(12)-Holliday junction (HJ) complex. HJ DNA is sandwiched between 2 RuvA tetramers; dsDNA enters through RuvA and exits via RuvB. An RuvB hexamer assembles on each DNA strand where it exits the tetramer. Each RuvB hexamer is contacted by two RuvA subunits (via domain III) on 2 adjacent RuvB subunits; this complex drives branch migration. In the full resolvosome a probable DNA-RuvA(4)-RuvB(12)-RuvC(2) complex forms which resolves the HJ.

It localises to the cytoplasm. It carries out the reaction ATP + H2O = ADP + phosphate + H(+). Functionally, the RuvA-RuvB-RuvC complex processes Holliday junction (HJ) DNA during genetic recombination and DNA repair, while the RuvA-RuvB complex plays an important role in the rescue of blocked DNA replication forks via replication fork reversal (RFR). RuvA specifically binds to HJ cruciform DNA, conferring on it an open structure. The RuvB hexamer acts as an ATP-dependent pump, pulling dsDNA into and through the RuvAB complex. RuvB forms 2 homohexamers on either side of HJ DNA bound by 1 or 2 RuvA tetramers; 4 subunits per hexamer contact DNA at a time. Coordinated motions by a converter formed by DNA-disengaged RuvB subunits stimulates ATP hydrolysis and nucleotide exchange. Immobilization of the converter enables RuvB to convert the ATP-contained energy into a lever motion, pulling 2 nucleotides of DNA out of the RuvA tetramer per ATP hydrolyzed, thus driving DNA branch migration. The RuvB motors rotate together with the DNA substrate, which together with the progressing nucleotide cycle form the mechanistic basis for DNA recombination by continuous HJ branch migration. Branch migration allows RuvC to scan DNA until it finds its consensus sequence, where it cleaves and resolves cruciform DNA. This Psychrobacter cryohalolentis (strain ATCC BAA-1226 / DSM 17306 / VKM B-2378 / K5) protein is Holliday junction branch migration complex subunit RuvB.